A 507-amino-acid polypeptide reads, in one-letter code: ATP synthase subunit alpha, chloroplastic (507 aa).

170-177 serves as a coordination point for ATP; the sequence is GDRQTGKT.

It belongs to the ATPase alpha/beta chains family. As to quaternary structure, F-type ATPases have 2 components, CF(1) - the catalytic core - and CF(0) - the membrane proton channel. CF(1) has five subunits: alpha(3), beta(3), gamma(1), delta(1), epsilon(1). CF(0) has four main subunits: a, b, b' and c.

It localises to the plastid. It is found in the chloroplast thylakoid membrane. The catalysed reaction is ATP + H2O + 4 H(+)(in) = ADP + phosphate + 5 H(+)(out). Its function is as follows. Produces ATP from ADP in the presence of a proton gradient across the membrane. The alpha chain is a regulatory subunit. This is ATP synthase subunit alpha, chloroplastic from Amborella trichopoda.